The sequence spans 1077 residues: Carbamoyl phosphate synthase large chain (1077 aa).

Positions 2 to 403 (PKRTDIKSIL…SLQKALRGLE (402 aa)) are carboxyphosphate synthetic domain. ATP-binding residues include R129, R169, G175, G176, E208, L210, E215, G241, I242, H243, Q285, and E299. The region spanning 133-328 (DIAMKKIGLD…IAKIAAKLAV (196 aa)) is the ATP-grasp 1 domain. 3 residues coordinate Mg(2+): Q285, E299, and N301. 3 residues coordinate Mn(2+): Q285, E299, and N301. Positions 404-553 (VGATGFDPKV…YSTYEEECES (150 aa)) are oligomerization domain. Positions 554-936 (NPTSDRPKVM…AFSKAMLGSQ (383 aa)) are carbamoyl phosphate synthetic domain. The 192-residue stretch at 679-870 (QQAVNRLGLK…LAKIAARVMV (192 aa)) folds into the ATP-grasp 2 domain. The ATP site is built by R715, R754, L756, E761, G786, V787, H788, S789, Q829, and E841. Positions 829, 841, and 843 each coordinate Mg(2+). Q829, E841, and N843 together coordinate Mn(2+). An MGS-like domain is found at 937-1077 (SGMKKSGRAL…MHAKIKNMKA (141 aa)). An allosteric domain region spans residues 937-1077 (SGMKKSGRAL…MHAKIKNMKA (141 aa)).

This sequence belongs to the CarB family. As to quaternary structure, composed of two chains; the small (or glutamine) chain promotes the hydrolysis of glutamine to ammonia, which is used by the large (or ammonia) chain to synthesize carbamoyl phosphate. Tetramer of heterodimers (alpha,beta)4. Mg(2+) serves as cofactor. The cofactor is Mn(2+).

It catalyses the reaction hydrogencarbonate + L-glutamine + 2 ATP + H2O = carbamoyl phosphate + L-glutamate + 2 ADP + phosphate + 2 H(+). The enzyme catalyses hydrogencarbonate + NH4(+) + 2 ATP = carbamoyl phosphate + 2 ADP + phosphate + 2 H(+). It participates in amino-acid biosynthesis; L-arginine biosynthesis; carbamoyl phosphate from bicarbonate: step 1/1. Its pathway is pyrimidine metabolism; UMP biosynthesis via de novo pathway; (S)-dihydroorotate from bicarbonate: step 1/3. Its function is as follows. Large subunit of the glutamine-dependent carbamoyl phosphate synthetase (CPSase). CPSase catalyzes the formation of carbamoyl phosphate from the ammonia moiety of glutamine, carbonate, and phosphate donated by ATP, constituting the first step of 2 biosynthetic pathways, one leading to arginine and/or urea and the other to pyrimidine nucleotides. The large subunit (synthetase) binds the substrates ammonia (free or transferred from glutamine from the small subunit), hydrogencarbonate and ATP and carries out an ATP-coupled ligase reaction, activating hydrogencarbonate by forming carboxy phosphate which reacts with ammonia to form carbamoyl phosphate. This is Carbamoyl phosphate synthase large chain from Yersinia pestis.